We begin with the raw amino-acid sequence, 183 residues long: Copper transporter 4 (183 aa).

Positions 1–21 are disordered; sequence MAMPMPMPPPGPGGDAPPAPT. 2 helical membrane passes run 56-76 and 115-135; these read VGMYFLCLLLVLALAALAEAL and LAYLVMLAVMSFNAGVLLAAV.

It belongs to the copper transporter (Ctr) (TC 1.A.56) family. SLC31A subfamily.

It localises to the membrane. Functionally, involved in the transport of copper. This is Copper transporter 4 (COPT4) from Oryza sativa subsp. japonica (Rice).